We begin with the raw amino-acid sequence, 201 residues long: Recombination protein RecR (201 aa).

A C4-type zinc finger spans residues 55-70 (CVCCGAFCEGRTCALC). The Toprim domain maps to 78–173 (GIICVVERAQ…IVTRLASGIP (96 aa)).

This sequence belongs to the RecR family.

Its function is as follows. May play a role in DNA repair. It seems to be involved in an RecBC-independent recombinational process of DNA repair. It may act with RecF and RecO. This chain is Recombination protein RecR, found in Treponema pallidum (strain Nichols).